The primary structure comprises 248 residues: Flavodoxin/ferredoxin--NADP reductase (248 aa).

Residues 2–101 (ADWVTGKVTK…SEAAGFFVLD (100 aa)) enclose the FAD-binding FR-type domain. Residues 50–53 (RAYS), Y66, 74–76 (KLS), and T116 contribute to the FAD site. Residues 143–144 (AR), 173–174 (SR), R184, 214–216 (NPQ), and D220 contribute to the NADP(+) site. 247–248 (YW) is an FAD binding site.

Belongs to the ferredoxin--NADP reductase type 1 family. Requires FAD as cofactor.

The protein localises to the cytoplasm. The catalysed reaction is 2 reduced [2Fe-2S]-[ferredoxin] + NADP(+) + H(+) = 2 oxidized [2Fe-2S]-[ferredoxin] + NADPH. It carries out the reaction reduced [flavodoxin] + NADP(+) = oxidized [flavodoxin] + NADPH + 2 H(+). Transports electrons between flavodoxin or ferredoxin and NADPH. The chain is Flavodoxin/ferredoxin--NADP reductase (fpr) from Shigella flexneri.